The primary structure comprises 276 residues: Methylesterase 17 (276 aa).

The 120-residue stretch at P19–P138 folds into the AB hydrolase-1 domain. The Acyl-ester intermediate role is filled by S95. Residues D225 and H252 each act as charge relay system in the active site.

This sequence belongs to the AB hydrolase superfamily. Methylesterase family. Expressed in several tissues of seedlings and adult plants, with a higher relative level of expression in the seedling shoot apex and the adult stem.

It carries out the reaction methyl (indol-3-yl)acetate + H2O = (indol-3-yl)acetate + methanol + H(+). It participates in plant hormone biosynthesis. Functionally, methylesterase that efficiently and specifically hydrolyzes methyl indole-3-acetic acid (MeIAA) to IAA (auxin). MeIAA is believed to be an inactive form of auxin that needs to be demethylated to exert a biological effect. In Arabidopsis thaliana (Mouse-ear cress), this protein is Methylesterase 17.